The chain runs to 218 residues: Adenylate kinase (218 aa).

10–15 (GAGKGT) provides a ligand contact to ATP. Residues 30 to 59 (STGDMLRAAVKAGTPLGIEAKKVMDAGGLM) form an NMP region. Residues Thr-31, Arg-36, 57-59 (GLM), 85-88 (GYPR), and Gln-92 each bind AMP. The tract at residues 122–159 (GRWVHLASGRSYNTQSNPPKVAGQDDITGEALIQRDDD) is LID. Residues Arg-123 and 132 to 133 (SY) contribute to the ATP site. AMP-binding residues include Arg-156 and Arg-167. Gly-203 contributes to the ATP binding site.

It belongs to the adenylate kinase family. As to quaternary structure, monomer.

Its subcellular location is the cytoplasm. The catalysed reaction is AMP + ATP = 2 ADP. It functions in the pathway purine metabolism; AMP biosynthesis via salvage pathway; AMP from ADP: step 1/1. In terms of biological role, catalyzes the reversible transfer of the terminal phosphate group between ATP and AMP. Plays an important role in cellular energy homeostasis and in adenine nucleotide metabolism. This chain is Adenylate kinase, found in Bordetella avium (strain 197N).